We begin with the raw amino-acid sequence, 1510 residues long: ABC transporter C family MRP4 (1510 aa).

12 consecutive transmembrane segments (helical) span residues glutamate 12–leucine 32, proline 55–tryptophan 75, alanine 78–valine 98, alanine 109–glutamine 129, phenylalanine 138–tyrosine 158, methionine 177–glycine 197, threonine 319–valine 339, leucine 342–alanine 362, tryptophan 373–tyrosine 393, alanine 427–leucine 447, isoleucine 453–alanine 473, and phenylalanine 540–leucine 560. The region spanning phenylalanine 320–glutamine 595 is the ABC transmembrane type-1 1 domain. Positions valine 629–alanine 852 constitute an ABC transporter 1 domain. Glycine 664 to serine 671 contacts ATP. The tract at residues leucine 889–arginine 925 is disordered. Basic residues predominate over residues lysine 906–arginine 918. 6 helical membrane-spanning segments follow: residues glycine 945–serine 965, serine 985–methionine 1005, isoleucine 1060–serine 1082, tryptophan 1086–alanine 1108, leucine 1154–leucine 1174, and leucine 1179–isoleucine 1199. Positions leucine 950–arginine 1220 constitute an ABC transmembrane type-1 2 domain. The ABC transporter 2 domain occupies isoleucine 1267–serine 1501. Glycine 1301–serine 1308 serves as a coordination point for ATP.

The protein belongs to the ABC transporter superfamily. ABCC family. Conjugate transporter (TC 3.A.1.208) subfamily. As to expression, expressed in roots, leaves, stalks, tassels, silks, developing seeds and developing embryos.

It is found in the membrane. In terms of biological role, ABC transporter that may affect phytic acid transport and compartmentalization. May function directly or indirectly in removing phytic acid from the cytosol or in vesicle trafficking. Required for phytic acid accumulation in developing seeds. Phytic acid is the primary storage form of phosphorus in cereal grains and other plant seeds. The polypeptide is ABC transporter C family MRP4 (Zea mays (Maize)).